Reading from the N-terminus, the 417-residue chain is RH-like protein ID (417 aa).

The next 11 membrane-spanning stretches (helical) occupy residues 12 to 32, 44 to 64, 77 to 97, 125 to 145, 172 to 192, 203 to 223, 238 to 258, 265 to 285, 287 to 307, 331 to 351, and 358 to 378; these read CLPL…YFFT, LVAS…GFGF, VAFN…LDGF, ISAG…MVLV, IYVF…KPLA, TIPS…WPSF, VFNT…VSSL, INMT…ATSC, LIPS…ISIG, NFSL…VLDT, and MVGF…VIAL.

Belongs to the ammonium transporter (TC 2.A.49) family. Rh subfamily.

The protein localises to the membrane. May be part of an oligomeric complex which is likely to have a transport or channel function in the erythrocyte membrane. This is RH-like protein ID from Gorilla gorilla gorilla (Western lowland gorilla).